Consider the following 374-residue polypeptide: Ribosomal RNA large subunit methyltransferase G (374 aa).

Belongs to the methyltransferase superfamily. RlmG family.

The protein resides in the cytoplasm. The enzyme catalyses guanosine(1835) in 23S rRNA + S-adenosyl-L-methionine = N(2)-methylguanosine(1835) in 23S rRNA + S-adenosyl-L-homocysteine + H(+). Specifically methylates the guanine in position 1835 (m2G1835) of 23S rRNA. This Ectopseudomonas mendocina (strain ymp) (Pseudomonas mendocina) protein is Ribosomal RNA large subunit methyltransferase G.